The chain runs to 156 residues: Small ribosomal subunit protein uS7 (156 aa).

It belongs to the universal ribosomal protein uS7 family. As to quaternary structure, part of the 30S ribosomal subunit. Contacts proteins S9 and S11.

Its function is as follows. One of the primary rRNA binding proteins, it binds directly to 16S rRNA where it nucleates assembly of the head domain of the 30S subunit. Is located at the subunit interface close to the decoding center, probably blocks exit of the E-site tRNA. This is Small ribosomal subunit protein uS7 from Blochmanniella pennsylvanica (strain BPEN).